The sequence spans 91 residues: Cytochrome c-554(547) (91 aa).

Heme c is bound by residues cysteine 15, cysteine 18, histidine 19, and methionine 64.

Monomer. In terms of processing, binds 1 heme c group covalently per subunit.

This chain is Cytochrome c-554(547), found in Halothiobacillus neapolitanus (Thiobacillus neapolitanus).